Consider the following 407-residue polypeptide: Putative replication protein A (407 aa).

Belongs to the ParA family.

This chain is Putative replication protein A, found in Sinorhizobium fredii (strain NBRC 101917 / NGR234).